We begin with the raw amino-acid sequence, 79 residues long: Small ribosomal subunit protein bS18B (79 aa).

A compositionally biased stretch (basic and acidic residues) spans 1-11 (MPRPRKADRTP). The interval 1–24 (MPRPRKADRTPARQRPNPLDRDGV) is disordered.

It belongs to the bacterial ribosomal protein bS18 family. In terms of assembly, part of the 30S ribosomal subunit. Forms a tight heterodimer with protein bS6.

Binds as a heterodimer with protein bS6 to the central domain of the 16S rRNA, where it helps stabilize the platform of the 30S subunit. The protein is Small ribosomal subunit protein bS18B of Streptomyces coelicolor (strain ATCC BAA-471 / A3(2) / M145).